Reading from the N-terminus, the 287-residue chain is MGGGGGLPEPEDSVLFRRGTGQSDDSDIWDDTALIKAYDKAVASFKHALKNGDISEASDKPKSTPKRKPAKKNKSQKKNATTALKQWKVGDKCSAVWSEDGCIYPATIASIDFKRETCVVVYTGYGNREEQNVSDLLSPACEVANNVEQDTQENENESQISTDESENSSRSPGNKPNNIKSKAAPWNSFLPPPPPMSGSGLGPGKPGVKFSGPPPPPPPPHFLSCWLPPFPSGPPIIPPPPPICPDSLDDADALGSMLISWYMSGYHTGYYMGFKQNQKEGRCSHFN.

The tract at residues 1 to 27 (MGGGGGLPEPEDSVLFRRGTGQSDDSD) is disordered. Positions 8–39 (PEPEDSVLFRRGTGQSDDSDIWDDTALIKAYD) are P1 (binding site for GEMIN2). Phosphothreonine is present on T20. A phosphoserine mark is found at S23 and S26. A Glycyl lysine isopeptide (Lys-Gly) (interchain with G-Cter in SUMO2) cross-link involves residue K46. The segment at 52-83 (GDISEASDKPKSTPKRKPAKKNKSQKKNATTA) is disordered. Basic residues predominate over residues 63-77 (STPKRKPAKKNKSQK). The residue at position 64 (T64) is a Phosphothreonine. The Tudor domain maps to 86–146 (QWKVGDKCSA…LSPACEVANN (61 aa)). Residues 92-205 (KCSAVWSEDG…MSGSGLGPGK (114 aa)) are required for interaction with RPP20/POP7. Residues 148 to 216 (EQDTQENENE…GVKFSGPPPP (69 aa)) are disordered. A compositionally biased stretch (polar residues) spans 157–180 (ESQISTDESENSSRSPGNKPNNIK). Residue K205 forms a Glycyl lysine isopeptide (Lys-Gly) (interchain with G-Cter in SUMO2) linkage. A P2 (binding site for SM B) region spans residues 234–261 (PPIIPPPPPICPDSLDDADALGSMLISW). The required for interaction with SYNCRIP stretch occupies residues 273 to 287 (GFKQNQKEGRCSHFN).

This sequence belongs to the SMN family. Homooligomer; may form higher order homooligomers in the dimer to octamer range. Part of the core SMN complex that contains SMN1, GEMIN2/SIP1, DDX20/GEMIN3, GEMIN4, GEMIN5, GEMIN6, GEMIN7, GEMIN8 and STRAP/UNRIP. Part of the SMN-Sm complex that contains SMN1, GEMIN2/SIP1, DDX20/GEMIN3, GEMIN4, GEMIN5, GEMIN6, GEMIN7, GEMIN8, STRAP/UNRIP and the Sm proteins SNRPB, SNRPD1, SNRPD2, SNRPD3, SNRPE, SNRPF and SNRPG. Component of an import snRNP complex composed of KPNB1, RNUT1, SMN1 and ZNF259. Interacts with DDX20, FBL, NOLA1, RNUT1, SYNCRIP and with several spliceosomal snRNP core Sm proteins, including SNRPB, SNRPD1, SNRPD2, SNRPD3, SNRPE and ILF3. Interacts with GEMIN2; the interaction is direct. Interacts with GEMIN3; the interaction is direct. Interacts with GEMIN8; the interaction is direct. Interacts with SNRPB; the interaction is direct. Interacts (via Tudor domain) with SNRPD1 (via C-terminus); the interaction is direct. Interacts with SNRPD2; the interaction is direct. Interacts (via Tudor domain) with SNRPD3 (via C-terminus); the interaction is direct. Interacts with SNRPE; the interaction is direct. Interacts with OSTF1, LSM10, LSM11 and RPP20/POP7. Interacts (via C-terminal region) with ZPR1 (via C-terminal region). Interacts (via Tudor domain) with COIL. Interacts with SETX; recruits SETX to POLR2A. Interacts with POLR2A (via the C-terminal domain (CTD)). Interacts with PRMT5. Interacts with XRN2. Interacts (via C-terminus) with FMR1 (via C-terminus); the interaction is direct and occurs in a RNA-independent manner. Interacts (via Tudor domain) with SF3B2 ('Arg-508'-methylated form). Interacts with WRAP53/TCAB1. Interacts (via Tudor domain) with ELAVL4 in an RNA-independent manner; the interaction is required for localization of ELAVL4 to RNA granules. Interacts with FRG1.

It is found in the nucleus. Its subcellular location is the gem. The protein localises to the cajal body. The protein resides in the cytoplasm. It localises to the cytoplasmic granule. It is found in the perikaryon. Its subcellular location is the cell projection. The protein localises to the neuron projection. The protein resides in the axon. It localises to the myofibril. It is found in the sarcomere. Its subcellular location is the z line. The SMN complex catalyzes the assembly of small nuclear ribonucleoproteins (snRNPs), the building blocks of the spliceosome, and thereby plays an important role in the splicing of cellular pre-mRNAs. Most spliceosomal snRNPs contain a common set of Sm proteins SNRPB, SNRPD1, SNRPD2, SNRPD3, SNRPE, SNRPF and SNRPG that assemble in a heptameric protein ring on the Sm site of the small nuclear RNA to form the core snRNP (Sm core). In the cytosol, the Sm proteins SNRPD1, SNRPD2, SNRPE, SNRPF and SNRPG are trapped in an inactive 6S pICln-Sm complex by the chaperone CLNS1A that controls the assembly of the core snRNP. To assemble core snRNPs, the SMN complex accepts the trapped 5Sm proteins from CLNS1A forming an intermediate. Binding of snRNA inside 5Sm ultimately triggers eviction of the SMN complex, thereby allowing binding of SNRPD3 and SNRPB to complete assembly of the core snRNP. Within the SMN complex, SMN1 acts as a structural backbone and together with GEMIN2 it gathers the Sm complex subunits. Ensures the correct splicing of U12 intron-containing genes that may be important for normal motor and proprioceptive neurons development. Also required for resolving RNA-DNA hybrids created by RNA polymerase II, that form R-loop in transcription terminal regions, an important step in proper transcription termination. May also play a role in the metabolism of small nucleolar ribonucleoprotein (snoRNPs). The chain is Survival motor neuron protein (SMN1) from Canis lupus familiaris (Dog).